We begin with the raw amino-acid sequence, 220 residues long: Large ribosomal subunit protein uL3 (220 aa).

The interval 127–155 (FQGAIKRHGQSRGPMSHSSHFHRAPDSVG) is disordered.

The protein belongs to the universal ribosomal protein uL3 family. In terms of assembly, part of the 50S ribosomal subunit. Forms a cluster with proteins L14 and L19.

In terms of biological role, one of the primary rRNA binding proteins, it binds directly near the 3'-end of the 23S rRNA, where it nucleates assembly of the 50S subunit. The polypeptide is Large ribosomal subunit protein uL3 (Staphylococcus aureus (strain JH9)).